Consider the following 690-residue polypeptide: Elongation factor G (690 aa).

The tr-type G domain maps to 8 to 283 (EDYRNFGIMA…AVVDYLPSPV (276 aa)). Residues 17-24 (AHIDAGKT), 81-85 (DTPGH), and 135-138 (NKMD) contribute to the GTP site.

The protein belongs to the TRAFAC class translation factor GTPase superfamily. Classic translation factor GTPase family. EF-G/EF-2 subfamily.

It localises to the cytoplasm. Catalyzes the GTP-dependent ribosomal translocation step during translation elongation. During this step, the ribosome changes from the pre-translocational (PRE) to the post-translocational (POST) state as the newly formed A-site-bound peptidyl-tRNA and P-site-bound deacylated tRNA move to the P and E sites, respectively. Catalyzes the coordinated movement of the two tRNA molecules, the mRNA and conformational changes in the ribosome. In Rhodopseudomonas palustris (strain BisB18), this protein is Elongation factor G.